A 417-amino-acid polypeptide reads, in one-letter code: NADH-quinone oxidoreductase subunit D (417 aa).

Belongs to the complex I 49 kDa subunit family. As to quaternary structure, NDH-1 is composed of 14 different subunits. Subunits NuoB, C, D, E, F, and G constitute the peripheral sector of the complex.

Its subcellular location is the cell inner membrane. It catalyses the reaction a quinone + NADH + 5 H(+)(in) = a quinol + NAD(+) + 4 H(+)(out). Functionally, NDH-1 shuttles electrons from NADH, via FMN and iron-sulfur (Fe-S) centers, to quinones in the respiratory chain. The immediate electron acceptor for the enzyme in this species is believed to be ubiquinone. Couples the redox reaction to proton translocation (for every two electrons transferred, four hydrogen ions are translocated across the cytoplasmic membrane), and thus conserves the redox energy in a proton gradient. The polypeptide is NADH-quinone oxidoreductase subunit D (Coxiella burnetii (strain RSA 331 / Henzerling II)).